A 167-amino-acid polypeptide reads, in one-letter code: uncharacterized protein (167 aa).

This is an uncharacterized protein from Homo sapiens (Human).